A 148-amino-acid polypeptide reads, in one-letter code: SsrA-binding protein (148 aa).

Residues Lys-127–Arg-142 show a composition bias toward basic and acidic residues. A disordered region spans residues Lys-127–Thr-148.

It belongs to the SmpB family.

The protein resides in the cytoplasm. Its function is as follows. Required for rescue of stalled ribosomes mediated by trans-translation. Binds to transfer-messenger RNA (tmRNA), required for stable association of tmRNA with ribosomes. tmRNA and SmpB together mimic tRNA shape, replacing the anticodon stem-loop with SmpB. tmRNA is encoded by the ssrA gene; the 2 termini fold to resemble tRNA(Ala) and it encodes a 'tag peptide', a short internal open reading frame. During trans-translation Ala-aminoacylated tmRNA acts like a tRNA, entering the A-site of stalled ribosomes, displacing the stalled mRNA. The ribosome then switches to translate the ORF on the tmRNA; the nascent peptide is terminated with the 'tag peptide' encoded by the tmRNA and targeted for degradation. The ribosome is freed to recommence translation, which seems to be the essential function of trans-translation. This Aromatoleum aromaticum (strain DSM 19018 / LMG 30748 / EbN1) (Azoarcus sp. (strain EbN1)) protein is SsrA-binding protein.